The chain runs to 427 residues: Phosphatidylinositol 4-phosphate 5-kinase 10 (427 aa).

The PIPK domain maps to Met1–Phe419. 2 disordered regions span residues Ser247–Asn287 and Met334–Gln355. Residues Tyr379–Ser400 are activation loop.

It catalyses the reaction a 1,2-diacyl-sn-glycero-3-phospho-(1D-myo-inositol 4-phosphate) + ATP = a 1,2-diacyl-sn-glycero-3-phospho-(1D-myo-inositol-4,5-bisphosphate) + ADP + H(+). The polypeptide is Phosphatidylinositol 4-phosphate 5-kinase 10 (PIP5K10) (Arabidopsis thaliana (Mouse-ear cress)).